The following is a 180-amino-acid chain: Large ribosomal subunit protein uL5c (180 aa).

The protein belongs to the universal ribosomal protein uL5 family. Part of the 50S ribosomal subunit; contacts the 5S rRNA.

The protein localises to the plastid. It localises to the chloroplast. Binds 5S rRNA, forms part of the central protuberance of the 50S subunit. The protein is Large ribosomal subunit protein uL5c (rpl5) of Stigeoclonium helveticum (Green alga).